The primary structure comprises 176 residues: dCTP deaminase (176 aa).

Residues 99 to 104 (RSTLAR) and Asp-115 each bind dCTP. Glu-125 functions as the Proton donor/acceptor in the catalytic mechanism. Residue Gln-163 participates in dCTP binding.

Belongs to the dCTP deaminase family. In terms of assembly, homotrimer.

The catalysed reaction is dCTP + H2O + H(+) = dUTP + NH4(+). Its pathway is pyrimidine metabolism; dUMP biosynthesis; dUMP from dCTP (dUTP route): step 1/2. In terms of biological role, catalyzes the deamination of dCTP to dUTP. This Pyrobaculum islandicum (strain DSM 4184 / JCM 9189 / GEO3) protein is dCTP deaminase.